The primary structure comprises 199 residues: Recombination protein RecR (199 aa).

The segment at 58 to 73 adopts a C4-type zinc-finger fold; sequence CSICNNITDVDPCTYC. Residues 81–176 enclose the Toprim domain; it reads QVICVVEEPT…RVTRIATGVP (96 aa).

This sequence belongs to the RecR family.

Its function is as follows. May play a role in DNA repair. It seems to be involved in an RecBC-independent recombinational process of DNA repair. It may act with RecF and RecO. The protein is Recombination protein RecR of Koribacter versatilis (strain Ellin345).